Consider the following 432-residue polypeptide: Protein RETICULATA, chloroplastic (432 aa).

Residues 1 to 47 (MAGCAMNLQFSSVVKVRNEISSFGICNRDFVFRDLAKAMKVPVLRIR) constitute a chloroplast transit peptide. Positions 109 to 140 (GNVGDGFNGSDGNGGGGGGGNGGEGDGEGEDY) are disordered. Gly residues predominate over residues 111–132 (VGDGFNGSDGNGGGGGGGNGGE). The next 2 helical transmembrane spans lie at 249 to 269 (LYVA…GMLA) and 322 to 342 (IMYG…ANLI).

Belongs to the RETICULATA family. As to expression, highly expressed in the vasculature of developing leaf primordia, margins of fully expanded leaves, hydathodes of rosette of cauline leaves, basal region of the lamina, stipules, root tips, stamens and in the abscission zone of the funiculus.

The protein resides in the plastid. It is found in the chloroplast membrane. In terms of biological role, may play a role in leaf development. Required for leaf mesophyll cell division in the early stages of leaf organogenesis. Acts in a developmental pathway that involves PPT1/CUE1 but does not include ASE2/DOV1. The protein is Protein RETICULATA, chloroplastic of Arabidopsis thaliana (Mouse-ear cress).